The following is a 438-amino-acid chain: Xylose isomerase (438 aa).

Catalysis depends on residues His100 and Asp103. Residues Glu231, Glu267, His270, Asp295, Asp306, Asp308, and Asp338 each coordinate Mg(2+).

It belongs to the xylose isomerase family. In terms of assembly, homotetramer. Mg(2+) is required as a cofactor.

Its subcellular location is the cytoplasm. It carries out the reaction alpha-D-xylose = alpha-D-xylulofuranose. In Pseudomonas syringae pv. tomato (strain ATCC BAA-871 / DC3000), this protein is Xylose isomerase.